The sequence spans 210 residues: Prolactin-2 (210 aa).

Residues 1–23 form the signal peptide; the sequence is MARRSQGTKLHLAVLCLVVSCHA. Intrachain disulfides connect Cys-69–Cys-183 and Cys-200–Cys-210.

The protein belongs to the somatotropin/prolactin family.

Its subcellular location is the secreted. This chain is Prolactin-2 (prl2), found in Oncorhynchus tshawytscha (Chinook salmon).